We begin with the raw amino-acid sequence, 588 residues long: Outer membrane transporter CdiB (588 aa).

Positions 104 to 179 (FTVSSIVVSG…GVLHITVMEG (76 aa)) constitute a POTRA domain.

Belongs to the TPS (TC 1.B.20) family.

The protein localises to the cell outer membrane. Its function is as follows. Potential outer membrane protein component of a toxin-immunity protein module, which functions as a cellular contact-dependent growth inhibition (CDI) system. CDI modules allow bacteria to communicate with and inhibit the growth of closely related neighboring bacteria in a contact-dependent fashion. This protein may be required for secretion and assembly of the CdiA toxin protein. Inhibitory cells must be in logarithmic (not stationary) phase to inhibit growth of their targets, while the presence of P or S but not type 1 pili protects the target cells against growth inhibition. Functionally, probable member of a two partner secretion pathway (TPS) in which it mediates the secretion of CdiA. This Escherichia coli protein is Outer membrane transporter CdiB.